We begin with the raw amino-acid sequence, 77 residues long: Defensin-like protein 4 (77 aa).

The signal sequence occupies residues 1–30 (MKFSMRLISAVLFLVMIFVATGMGPVTVEA). Disulfide bonds link Cys33/Cys77, Cys44/Cys64, Cys50/Cys71, and Cys54/Cys73.

The protein belongs to the DEFL family. Expressed in roots, siliques and seeds.

It localises to the secreted. Confers broad-spectrum resistance to pathogens. The chain is Defensin-like protein 4 (PDF2.1) from Arabidopsis thaliana (Mouse-ear cress).